A 603-amino-acid polypeptide reads, in one-letter code: Nuclear receptor subfamily 2 group C member 1 (603 aa).

The tract at residues M1–M178 is required for interaction with KAT2B. The segment at residues F110 to C185 is a DNA-binding region (nuclear receptor). NR C4-type zinc fingers lie at residues C113–C133 and C149–C168. Phosphoserine occurs at positions 197 and 215. Position 220 is a phosphothreonine (T220). The residue at position 222 (T222) is a Phosphothreonine; by MAPK1. K250 is covalently cross-linked (Glycyl lysine isopeptide (Lys-Gly) (interchain with G-Cter in SUMO); alternate). A Glycyl lysine isopeptide (Lys-Gly) (interchain with G-Cter in SUMO2); alternate cross-link involves residue K250. Residues G348–E590 enclose the NR LBD domain. The residue at position 581 (S581) is a Phosphoserine; by PKC. Residues P584–I603 form a required for interaction with NRIP1 region. A Glycyl lysine isopeptide (Lys-Gly) (interchain with G-Cter in SUMO2) cross-link involves residue K588.

This sequence belongs to the nuclear hormone receptor family. NR2 subfamily. In terms of assembly, homodimer. Heterodimer; binds DNA as a heterodimer with NR2C2 required for chromatin remodeling and for binding to promoter regions such as globin DR1 repeats. Interacts with ESR1; the interaction prevents homodimerization of ESR1 and suppresses its transcriptional activity and cell growth. Interacts with NRIP1 (via its LXXLL motifs); the interaction provides corepressor activity. Interacts with HDAC3 (via the DNA-binding domain). Interacts with HDAC4 (via the DNA-binding domain). Interacts with PIAS1; the interaction is required for sumoylation of NR2C1. Interacts with UBE2I; the interaction is required for sumoylation of NR2C1. Interacts with KAT2B; the interaction acts as a corepressor of gene expression. Post-translationally, sumoylation requires both PIAS1 and UBE2I. Sumoylation appears to dissociate NR2C1 from the PML nuclear bodies. Enhances the interaction with NRIP1 but inhibits interaction with KAT2B. In proliferating cells, stimulation by all-trans retinoic acid, activation of MAPK1-mediated phosphorylation and recruitment to PML bodies with subsequent sumoylation, suppresses OCT4 expression. Phosphorylated on several serine and threonine residues. Phosphorylation on Thr-220, stimulated by all-trans retinoic acid (atRA) mediates PML location and sumoylation in proliferating cells which then modulates its association with effector molecules, KAT2B and NRIP1. Phosphorylation on Ser-581 by PKC is important for protein stability and function as activator of RARB.

Its subcellular location is the nucleus. It is found in the PML body. Its function is as follows. Orphan nuclear receptor. Binds the IR7 element in the promoter of its own gene in an autoregulatory negative feedback mechanism. Primarily repressor of a broad range of genes. Binds to hormone response elements (HREs) consisting of two 5'-AGGTCA-3' half site direct repeat consensus sequences. Together with NR2C2, forms the core of the DRED (direct repeat erythroid-definitive) complex that represses embryonic and fetal globin transcription. Also activator of OCT4 gene expression. May be involved in stem cell proliferation and differentiation. Mediator of retinoic acid-regulated preadipocyte proliferation. This Macaca fascicularis (Crab-eating macaque) protein is Nuclear receptor subfamily 2 group C member 1 (NR2C1).